Consider the following 727-residue polypeptide: MGRRAKMVEQVVSLMETHDQIRNIGICAHIDHGKTTLSDNLLAGAGMISKDLAGDQLALDFDEEEAERGITIYAANVSMVHECQGKPHLINLIDTPGHVDFGGDVTRAMRAIDGAVVVVCAVEGIMPQTETVLRQALKEKVKPILFINKVDRLLNELKLTPEELQNRFMKIIADVNKLIEKMSPEEFKGKWVVNVMDGSVAFGSAYHNWAISVPYMQKTKITFKDIIDYCEAENQKELAEKAPLHAVLLDMVVTHLPNPVEAQKYRIPNIWKGDLESEIGKAMVNCDPNGPMAGVVTKIIMDKHAGAISACRLFSGRIKQGDELRLVSIKAKARAQQVAVFMGAERVQVPSVSAGNICALTGLKEASAGETVCSPNTILDPSFESITHVSEPVITVAIEAKNTKDLPKLIDVLRQIAKEDNTVRVEINEETGEHLISGMGELHIEVITNTKIGRDAGVEVDVGEPIVVYREAVNGVSPEVEGKSPNKHNRLYFVAEPLDECVYNAHVEGLIKDEDFKKKTPKEVETKLVEIGMNREEAKRVMTIYEGNVLLNMTRGIVQLDEARELIIEGFKEAVKNGPLAAEKCQGVKVKLMDAVFHEDAIHRGPAQLIPAVRTGVRDAIAQANVGLLEPIQNVYISTPQDYMGDAMKELSNRRGQILDMEQEGDMTTIKSKAPVSEMFGFAGAIRGATQGRCLWSIEFGGFEKVPTELQPQIVKEIRTRKGLKTD.

One can recognise a tr-type G domain in the interval 19-260 (DQIRNIGICA…MVVTHLPNPV (242 aa)). GTP is bound by residues 28–35 (AHIDHGKT), 94–98 (DTPGH), and 148–151 (NKVD). Position 603 is a diphthamide (His603).

It belongs to the TRAFAC class translation factor GTPase superfamily. Classic translation factor GTPase family. EF-G/EF-2 subfamily.

It localises to the cytoplasm. In terms of biological role, catalyzes the GTP-dependent ribosomal translocation step during translation elongation. During this step, the ribosome changes from the pre-translocational (PRE) to the post-translocational (POST) state as the newly formed A-site-bound peptidyl-tRNA and P-site-bound deacylated tRNA move to the P and E sites, respectively. Catalyzes the coordinated movement of the two tRNA molecules, the mRNA and conformational changes in the ribosome. The polypeptide is Elongation factor 2 (Methanococcus aeolicus (strain ATCC BAA-1280 / DSM 17508 / OCM 812 / Nankai-3)).